The primary structure comprises 1150 residues: Cell division cycle and apoptosis regulator protein 1 (1150 aa).

Positions 1–249 (MAQFGGQKNP…TQPQPQSLLQ (249 aa)) are interaction with AR. 2 disordered regions span residues 124–146 (PTAQ…QPQK) and 285–354 (IVSQ…SPRR). Over residues 134 to 146 (TPRSSQQQTQPQK) the composition is skewed to low complexity. The interaction with GATA2 stretch occupies residues 203 to 660 (QRIQTLPNQN…RALSSKGLKS (458 aa)). Basic and acidic residues-rich tracts occupy residues 293 to 334 (RRLD…ERSP) and 341 to 352 (ERSPRRERERSP). Position 456 is a phosphoserine (serine 456). The stretch at 594–618 (KQQLVEKLQGERKEADGEQDEEEKD) forms a coiled coil. Positions 600 to 638 (KLQGERKEADGEQDEEEKDDGEAKEISTPTHWSKLDPKT) are disordered. Over residues 610-621 (GEQDEEEKDDGE) the composition is skewed to acidic residues. Threonine 627 carries the post-translational modification Phosphothreonine. The region spanning 636 to 670 (PKTMKVNDLRKELESRALSSKGLKSQLIARLTKQL) is the SAP domain. Residue lysine 637 forms a Glycyl lysine isopeptide (Lys-Gly) (interchain with G-Cter in ubiquitin) linkage. The segment at 643 to 1150 (DLRKELESRA…QKSKENGASV (508 aa)) is interaction with GATA1. Threonine 667 is modified (phosphothreonine). Composition is skewed to basic and acidic residues over residues 673–687 (EEQK…KSEK), 694–713 (DRKS…EEIE), 796–817 (KEDK…KKEE), and 832–855 (SGDD…KDDS). Disordered stretches follow at residues 673-713 (EEQK…EEIE) and 796-915 (KEDK…EKEK). Phosphoserine is present on residues serine 685 and serine 697. The span at 856-889 (KDDDETEEDNNQDEYDPMEAEEAEDEEDDRDEEE) shows a compositional bias: acidic residues. Residue threonine 861 is modified to Phosphothreonine. The span at 890–915 (MTKRDDKRDINRYCKERPSKDKEKEK) shows a compositional bias: basic and acidic residues. A Glycyl lysine isopeptide (Lys-Gly) (interchain with G-Cter in SUMO1); alternate cross-link involves residue lysine 1012. Lysine 1012 is covalently cross-linked (Glycyl lysine isopeptide (Lys-Gly) (interchain with G-Cter in SUMO2); alternate). A coiled-coil region spans residues 1033-1114 (DVGSLLQKLE…LQFENQMNKT (82 aa)). Residues lysine 1067 and lysine 1135 each participate in a glycyl lysine isopeptide (Lys-Gly) (interchain with G-Cter in SUMO2) cross-link.

In terms of assembly, directly interacts with ESR1, NR3C1 and p53/TP53. Interacts (via N-terminus) with CALCOCO1. Interacts with MED1. Interacts with GATA1. Interacts with AR and GATA2. In terms of tissue distribution, expressed in various epithelial cancer cell lines, including breast, colon, prostate, pancreatic and leukemia. Expression is regulated by growth factors.

It localises to the cytoplasm. The protein resides in the perinuclear region. Functionally, associates with components of the Mediator and p160 coactivator complexes that play a role as intermediaries transducing regulatory signals from upstream transcriptional activator proteins to basal transcription machinery at the core promoter. Recruited to endogenous nuclear receptor target genes in response to the appropriate hormone. Also functions as a p53 coactivator. May thus play an important role in transcriptional regulation. May be involved in apoptosis signaling in the presence of the reinoid CD437. Apoptosis induction involves sequestration of 14-3-3 protein(s) and mediated altered expression of multiple cell cycle regulatory genes including MYC, CCNB1 and CDKN1A. Plays a role in cell cycle progression and/or cell proliferation. In association with CALCOCO1 enhances GATA1- and MED1-mediated transcriptional activation from the gamma-globin promoter during erythroid differentiation of K562 erythroleukemia cells. Can act as a both a coactivator and corepressor of AR-mediated transcription. Contributes to chromatin looping and AR transcription complex assembly by stabilizing AR-GATA2 association on chromatin and facilitating MED1 and RNA polymerase II recruitment to AR-binding sites. May play an important role in the growth and tumorigenesis of prostate cancer cells. The sequence is that of Cell division cycle and apoptosis regulator protein 1 (CCAR1) from Homo sapiens (Human).